A 176-amino-acid chain; its full sequence is Photosystem I assembly protein Ycf4 (176 aa).

A run of 2 helical transmembrane segments spans residues 22 to 42 (FLWA…GTAS) and 57 to 77 (VMTF…SMLF).

This sequence belongs to the Ycf4 family.

The protein resides in the plastid thylakoid membrane. Its function is as follows. Seems to be required for the assembly of the photosystem I complex. This is Photosystem I assembly protein Ycf4 from Cuscuta obtusiflora (Peruvian dodder).